The sequence spans 178 residues: ATP synthase subunit delta (178 aa).

Belongs to the ATPase delta chain family. In terms of assembly, F-type ATPases have 2 components, F(1) - the catalytic core - and F(0) - the membrane proton channel. F(1) has five subunits: alpha(3), beta(3), gamma(1), delta(1), epsilon(1). F(0) has three main subunits: a(1), b(2) and c(10-14). The alpha and beta chains form an alternating ring which encloses part of the gamma chain. F(1) is attached to F(0) by a central stalk formed by the gamma and epsilon chains, while a peripheral stalk is formed by the delta and b chains.

Its subcellular location is the cell inner membrane. In terms of biological role, f(1)F(0) ATP synthase produces ATP from ADP in the presence of a proton or sodium gradient. F-type ATPases consist of two structural domains, F(1) containing the extramembraneous catalytic core and F(0) containing the membrane proton channel, linked together by a central stalk and a peripheral stalk. During catalysis, ATP synthesis in the catalytic domain of F(1) is coupled via a rotary mechanism of the central stalk subunits to proton translocation. Functionally, this protein is part of the stalk that links CF(0) to CF(1). It either transmits conformational changes from CF(0) to CF(1) or is implicated in proton conduction. The sequence is that of ATP synthase subunit delta from Alcanivorax borkumensis (strain ATCC 700651 / DSM 11573 / NCIMB 13689 / SK2).